Consider the following 129-residue polypeptide: Large ribosomal subunit protein bL17 (129 aa).

The protein belongs to the bacterial ribosomal protein bL17 family. Part of the 50S ribosomal subunit. Contacts protein L32.

The chain is Large ribosomal subunit protein bL17 from Buchnera aphidicola subsp. Baizongia pistaciae (strain Bp).